The chain runs to 143 residues: Transcriptional regulator MraZ (143 aa).

SpoVT-AbrB domains follow at residues Glu5–Glu47 and Ala76–Glu119.

The protein belongs to the MraZ family. As to quaternary structure, forms oligomers.

The protein resides in the cytoplasm. It localises to the nucleoid. The sequence is that of Transcriptional regulator MraZ from Listeria monocytogenes serotype 4b (strain CLIP80459).